A 144-amino-acid polypeptide reads, in one-letter code: MLQPKKTKYRKAFKGRIKGDAKGGTTLNFGSYGLKALEPERVTARQIEAARRAITRHIKRQGRLWIRVFPDVPVSKKPAEVRQGKGKGSVEYWAARVKPGRILFELDGVPGPLAASAFERAAMKLPVKTKVVARFGDTSHLGGN.

The protein belongs to the universal ribosomal protein uL16 family. Part of the 50S ribosomal subunit.

Its function is as follows. Binds 23S rRNA and is also seen to make contacts with the A and possibly P site tRNAs. The polypeptide is Large ribosomal subunit protein uL16 (Erythrobacter litoralis (strain HTCC2594)).